A 530-amino-acid polypeptide reads, in one-letter code: Phosphoenolpyruvate carboxykinase (ATP) (530 aa).

Positions 56, 196, and 202 each coordinate substrate. Residues Lys-202, His-221, and 237 to 245 each bind ATP; that span reads GLSGTGKTT. Mn(2+) is bound by residues Lys-202 and His-221. Asp-258 serves as a coordination point for Mn(2+). ATP contacts are provided by residues Glu-286, Arg-322, 438–439, and Thr-444; that span reads RI. Residue Arg-322 participates in substrate binding.

It belongs to the phosphoenolpyruvate carboxykinase (ATP) family. Monomer. Mn(2+) is required as a cofactor.

Its subcellular location is the cytoplasm. The enzyme catalyses oxaloacetate + ATP = phosphoenolpyruvate + ADP + CO2. It functions in the pathway carbohydrate biosynthesis; gluconeogenesis. Involved in the gluconeogenesis. Catalyzes the conversion of oxaloacetate (OAA) to phosphoenolpyruvate (PEP) through direct phosphoryl transfer between the nucleoside triphosphate and OAA. In Photobacterium profundum (strain SS9), this protein is Phosphoenolpyruvate carboxykinase (ATP).